A 403-amino-acid chain; its full sequence is High affinity transport system protein p37 (403 aa).

An N-terminal signal peptide occupies residues 1–23 (MLKKLKNFILFSSIFSPIAFAIS). The N-palmitoyl cysteine moiety is linked to residue Cys24. Residue Cys24 is the site of S-diacylglycerol cysteine attachment.

The protein localises to the cell membrane. In terms of biological role, P37 is part of a high-affinity transport system. The protein is High affinity transport system protein p37 (p37) of Mesomycoplasma hyorhinis (Mycoplasma hyorhinis).